We begin with the raw amino-acid sequence, 387 residues long: Phosphoglycerate kinase (387 aa).

Residues 21-23, Arg-36, 60-63, Arg-114, and Arg-147 contribute to the substrate site; these read DLN and HLGR. Residues Lys-198, Glu-313, and 339–342 contribute to the ATP site; that span reads GGDT.

The protein belongs to the phosphoglycerate kinase family. In terms of assembly, monomer.

The protein resides in the cytoplasm. The enzyme catalyses (2R)-3-phosphoglycerate + ATP = (2R)-3-phospho-glyceroyl phosphate + ADP. Its pathway is carbohydrate degradation; glycolysis; pyruvate from D-glyceraldehyde 3-phosphate: step 2/5. This chain is Phosphoglycerate kinase, found in Baumannia cicadellinicola subsp. Homalodisca coagulata.